The chain runs to 1131 residues: DNA polymerase II large subunit (1131 aa).

The protein belongs to the archaeal DNA polymerase II family. Heterodimer of a large subunit and a small subunit.

The enzyme catalyses DNA(n) + a 2'-deoxyribonucleoside 5'-triphosphate = DNA(n+1) + diphosphate. It carries out the reaction Exonucleolytic cleavage in the 3'- to 5'-direction to yield nucleoside 5'-phosphates.. In terms of biological role, possesses two activities: a DNA synthesis (polymerase) and an exonucleolytic activity that degrades single-stranded DNA in the 3'- to 5'-direction. Has a template-primer preference which is characteristic of a replicative DNA polymerase. This is DNA polymerase II large subunit from Methanococcus maripaludis (strain DSM 14266 / JCM 13030 / NBRC 101832 / S2 / LL).